The chain runs to 306 residues: MEITFFGTSAGLPTKERNTQAIALNLEPYSNNIWLFDVGEGTQHQILHHSIKLGKVDHIFITHMHGDHIFGLPGLLTSRSFQGGEGKPLTLIGPKGIKAYIETTLRLSESKLNYPITYIEIENHLSYQNNGFNVEAHMLNHGIPSFGYRIEAPYTSGKIDVSALKEIGLEPGPKYQDVKNNETFEYNGIIYNSKDFKGDAVKGPVIAIFGDTMPCQNEEIIADHANVMVHESTYIEGDKSLANNYHHSHIEDVFTLIENAHVDYSLITHMSNRYTIEEVETISKSLKSLPTTPPFKFVKDFDSWSF.

Zn(2+) contacts are provided by histidine 63, histidine 65, aspartate 67, histidine 68, histidine 141, aspartate 211, and histidine 269. Aspartate 67 serves as the catalytic Proton acceptor.

This sequence belongs to the RNase Z family. In terms of assembly, homodimer. The cofactor is Zn(2+).

It carries out the reaction Endonucleolytic cleavage of RNA, removing extra 3' nucleotides from tRNA precursor, generating 3' termini of tRNAs. A 3'-hydroxy group is left at the tRNA terminus and a 5'-phosphoryl group is left at the trailer molecule.. Zinc phosphodiesterase, which displays some tRNA 3'-processing endonuclease activity. Probably involved in tRNA maturation, by removing a 3'-trailer from precursor tRNA. The polypeptide is Ribonuclease Z (Staphylococcus saprophyticus subsp. saprophyticus (strain ATCC 15305 / DSM 20229 / NCIMB 8711 / NCTC 7292 / S-41)).